The sequence spans 807 residues: Leucine-rich repeat-containing protein 41 (807 aa).

An interaction with Elongin BC complex region spans residues 45–54 (ALFELCGRAV). S155, S276, and S326 each carry phosphoserine. Disordered regions lie at residues 269-290 (ASRGRAPSRDEGSLLLGSRRPR), 304-335 (TRRKSEVKQMPRAVPPTRVTRRSTQESLAIGG), and 349-403 (ASGT…GSGA). T327 carries the phosphothreonine modification. Low complexity predominate over residues 352–381 (TKQPSAPAAASASSSTSSKRAPASSASQPK). A Phosphoserine modification is found at S368. The segment covering 382-396 (PLKRFKRAAGKKGPR) has biased composition (basic residues). LRR repeat units lie at residues 482–502 (WVSLESLTLSYNGLGSNIFRL), 513–525 (AGCRLRALHLSDL), 526–550 (FSPLPILELTRAIVRALPLLRVLSI), 608–632 (SGSLQQLSLDSATFASPQDFGLVLQ), 638–661 (NLSLKRLSFHDMNLADCQSEVLFL), 696–723 (NSTLKGLRLPGNRLGNAGLLALADVFSE), and 726–747 (SSSLCQLDISSNCIKPDGLLEF).

Part of an E3 ubiquitin-protein ligase complex with Elongin BC (ELOB and ELOC), RBX1 and CUL5. Component of a probable ECS(LRRC41) complex which contains CUL5, RNF7/RBX2, Elongin BC and LRRC41. Interacts with CUL5, RNF7, ELOB and ELOC.

It participates in protein modification; protein ubiquitination. Its function is as follows. Probable substrate recognition component of an ECS (Elongin BC-CUL2/5-SOCS-box protein) E3 ubiquitin ligase complex which mediates the ubiquitination and subsequent proteasomal degradation of target proteins. The polypeptide is Leucine-rich repeat-containing protein 41 (Lrrc41) (Mus musculus (Mouse)).